The sequence spans 298 residues: Protoheme IX farnesyltransferase (298 aa).

9 helical membrane passes run 16-36 (VVAL…PDMP), 45-65 (ALGF…NQLL), 93-113 (VFAG…VNVI), 114-134 (TAVL…VYLK), 141-161 (IVIG…AVTG), 172-192 (SLLV…LAIF), 218-238 (ILVY…VGMS), 241-261 (FYLG…WRML), and 277-297 (IVYL…LPWV).

It belongs to the UbiA prenyltransferase family. Protoheme IX farnesyltransferase subfamily.

The protein localises to the cell inner membrane. It carries out the reaction heme b + (2E,6E)-farnesyl diphosphate + H2O = Fe(II)-heme o + diphosphate. Its pathway is porphyrin-containing compound metabolism; heme O biosynthesis; heme O from protoheme: step 1/1. Converts heme B (protoheme IX) to heme O by substitution of the vinyl group on carbon 2 of heme B porphyrin ring with a hydroxyethyl farnesyl side group. The sequence is that of Protoheme IX farnesyltransferase from Xanthomonas axonopodis pv. citri (strain 306).